A 156-amino-acid chain; its full sequence is ATP synthase subunit b (156 aa).

The helical transmembrane segment at 7-27 (LFAQMIVFFVLWWVVARFVWP) threads the bilayer.

Belongs to the ATPase B chain family. As to quaternary structure, F-type ATPases have 2 components, F(1) - the catalytic core - and F(0) - the membrane proton channel. F(1) has five subunits: alpha(3), beta(3), gamma(1), delta(1), epsilon(1). F(0) has three main subunits: a(1), b(2) and c(10-14). The alpha and beta chains form an alternating ring which encloses part of the gamma chain. F(1) is attached to F(0) by a central stalk formed by the gamma and epsilon chains, while a peripheral stalk is formed by the delta and b chains.

It localises to the cell inner membrane. In terms of biological role, f(1)F(0) ATP synthase produces ATP from ADP in the presence of a proton or sodium gradient. F-type ATPases consist of two structural domains, F(1) containing the extramembraneous catalytic core and F(0) containing the membrane proton channel, linked together by a central stalk and a peripheral stalk. During catalysis, ATP synthesis in the catalytic domain of F(1) is coupled via a rotary mechanism of the central stalk subunits to proton translocation. Component of the F(0) channel, it forms part of the peripheral stalk, linking F(1) to F(0). In Polynucleobacter necessarius subsp. necessarius (strain STIR1), this protein is ATP synthase subunit b.